Here is a 196-residue protein sequence, read N- to C-terminus: Histone H1.0-B (196 aa).

Disordered regions lie at residues 1 to 29 (MAEN…PKYS) and 86 to 196 (GVGA…GRKK). Residues 24 to 97 (DHPKYSDMIL…GASGSFRLAK (74 aa)) enclose the H15 domain. The span at 104-196 (PAKKPKKEIK…ASPKKSGRKK (93 aa)) shows a compositional bias: basic residues.

It belongs to the histone H1/H5 family.

The protein resides in the nucleus. The protein localises to the chromosome. Histones H1 are necessary for the condensation of nucleosome chains into higher-order structures. The histones H1.0 are found in cells that are in terminal stages of differentiation or that have low rates of cell division. In Xenopus laevis (African clawed frog), this protein is Histone H1.0-B (h1-0-b).